Reading from the N-terminus, the 557-residue chain is Formate--tetrahydrofolate ligase 2 (557 aa).

Residue 66-73 (TPAGEGKT) participates in ATP binding.

The protein belongs to the formate--tetrahydrofolate ligase family.

The enzyme catalyses (6S)-5,6,7,8-tetrahydrofolate + formate + ATP = (6R)-10-formyltetrahydrofolate + ADP + phosphate. It participates in one-carbon metabolism; tetrahydrofolate interconversion. This chain is Formate--tetrahydrofolate ligase 2, found in Streptococcus pyogenes serotype M6 (strain ATCC BAA-946 / MGAS10394).